A 314-amino-acid chain; its full sequence is Acetyl-coenzyme A carboxylase carboxyl transferase subunit beta (314 aa).

Positions Leu24–Ala293 constitute a CoA carboxyltransferase N-terminal domain. The interval Glu283–Ala314 is disordered. Low complexity-rich tracts occupy residues Ile284–Glu295 and Pro304–Ala314.

Belongs to the AccD/PCCB family. Acetyl-CoA carboxylase is a heterohexamer composed of biotin carboxyl carrier protein (AccB), biotin carboxylase (AccC) and two subunits each of ACCase subunit alpha (AccA) and ACCase subunit beta (AccD).

It localises to the cytoplasm. The catalysed reaction is N(6)-carboxybiotinyl-L-lysyl-[protein] + acetyl-CoA = N(6)-biotinyl-L-lysyl-[protein] + malonyl-CoA. The protein operates within lipid metabolism; malonyl-CoA biosynthesis; malonyl-CoA from acetyl-CoA: step 1/1. Its function is as follows. Component of the acetyl coenzyme A carboxylase (ACC) complex. Biotin carboxylase (BC) catalyzes the carboxylation of biotin on its carrier protein (BCCP) and then the CO(2) group is transferred by the transcarboxylase to acetyl-CoA to form malonyl-CoA. This is Acetyl-coenzyme A carboxylase carboxyl transferase subunit beta from Nitrobacter hamburgensis (strain DSM 10229 / NCIMB 13809 / X14).